We begin with the raw amino-acid sequence, 227 residues long: Probable septum site-determining protein MinC (227 aa).

Belongs to the MinC family. Interacts with MinD and FtsZ.

Functionally, cell division inhibitor that blocks the formation of polar Z ring septums. Rapidly oscillates between the poles of the cell to destabilize FtsZ filaments that have formed before they mature into polar Z rings. Prevents FtsZ polymerization. The protein is Probable septum site-determining protein MinC of Photorhabdus laumondii subsp. laumondii (strain DSM 15139 / CIP 105565 / TT01) (Photorhabdus luminescens subsp. laumondii).